A 286-amino-acid polypeptide reads, in one-letter code: Gap junction alpha-6 protein (286 aa).

The Cytoplasmic portion of the chain corresponds to 1-23; it reads MSDWSALHQLLEKVQPYSTAGGK. Residues 24–41 traverse the membrane as a helical segment; it reads VWIKVLFIFRILLLGTAI. Topologically, residues 42–76 are extracellular; that stretch reads ESAWSDEQFEFHCNTQQPGCENVCYDQAFPISHVR. A helical membrane pass occupies residues 77–99; that stretch reads LWVLQVIFVSVPTLLHLAHVYYV. The Cytoplasmic segment spans residues 100 to 151; it reads IRQNEKLKKQEEEELKVAHFNGASGERRLQKHTGKHIKCGSKEHGNRKMRGR. The chain crosses the membrane as a helical span at residues 152-174; sequence LLLTYMASIFFKSVFEVAFLLIQ. Residues 175–209 lie on the Extracellular side of the membrane; the sequence is WYLYGFTLSAVYICEQSPCPHRVDCFLSRPTEKTI. A helical membrane pass occupies residues 210–232; the sequence is FILFMLVVSMVSFVLNVIELFYV. Over 233-286 the chain is Cytoplasmic; the sequence is LFKAIKNHLGNEKEEVYCNPVELQKPSCVSSSAVLTTICSSDQVVPVGLSSFYM.

This sequence belongs to the connexin family. Alpha-type (group II) subfamily. A connexon is composed of a hexamer of connexins. As to expression, expressed in testis.

Its subcellular location is the cell membrane. It localises to the cell junction. The protein resides in the gap junction. Its function is as follows. One gap junction consists of a cluster of closely packed pairs of transmembrane channels, the connexons, through which materials of low MW diffuse from one cell to a neighboring cell. The chain is Gap junction alpha-6 protein (Gja6) from Rattus norvegicus (Rat).